Consider the following 107-residue polypeptide: Phosphoribosyl-ATP pyrophosphatase (107 aa).

It belongs to the PRA-PH family.

It localises to the cytoplasm. It carries out the reaction 1-(5-phospho-beta-D-ribosyl)-ATP + H2O = 1-(5-phospho-beta-D-ribosyl)-5'-AMP + diphosphate + H(+). Its pathway is amino-acid biosynthesis; L-histidine biosynthesis; L-histidine from 5-phospho-alpha-D-ribose 1-diphosphate: step 2/9. This Zymomonas mobilis subsp. mobilis (strain ATCC 31821 / ZM4 / CP4) protein is Phosphoribosyl-ATP pyrophosphatase.